The following is a 1935-amino-acid chain: Myosin-7 (1935 aa).

Residues Asp-32–Pro-81 enclose the Myosin N-terminal SH3-like domain. Positions Asp-85 to Asp-778 constitute a Myosin motor domain. The residue at position 129 (Lys-129) is an N6,N6,N6-trimethyllysine. Gly-178–Thr-185 contributes to the ATP binding site. Phosphothreonine is present on Thr-378. Actin-binding stretches follow at residues Leu-655–Glu-677 and Arg-757–Gly-771. Residues Leu-781–Ser-810 enclose the IQ domain. Residues Leu-839–Glu-1935 adopt a coiled-coil conformation. 2 positions are modified to phosphoserine: Ser-1137 and Ser-1269. A Phosphothreonine modification is found at Thr-1282. Tyr-1308 is modified (phosphotyrosine). The residue at position 1309 (Thr-1309) is a Phosphothreonine. Position 1510 is a phosphoserine (Ser-1510). The residue at position 1513 (Thr-1513) is a Phosphothreonine. The disordered stretch occupies residues Glu-1907 to Glu-1935. Residues Lys-1923–Glu-1935 show a composition bias toward basic and acidic residues.

Belongs to the TRAFAC class myosin-kinesin ATPase superfamily. Myosin family. As to quaternary structure, muscle myosin is a hexameric protein that consists of 2 heavy chain subunits (MHC), 2 alkali light chain subunits (MLC) and 2 regulatory light chain subunits (MLC-2). Interacts with ECPAS. Interacts (via C-terminus) with LRRC39.

Its subcellular location is the cytoplasm. The protein resides in the myofibril. The protein localises to the sarcomere. In terms of biological role, myosins are actin-based motor molecules with ATPase activity essential for muscle contraction. Forms regular bipolar thick filaments that, together with actin thin filaments, constitute the fundamental contractile unit of skeletal and cardiac muscle. The polypeptide is Myosin-7 (MYH7) (Equus caballus (Horse)).